Reading from the N-terminus, the 323-residue chain is L-lactate dehydrogenase (323 aa).

V12, D33, and Y65 together coordinate NAD(+). Substrate is bound by residues R94 and 126-129 (NPCD). NAD(+) is bound at residue T149. 154–157 (ETMR) provides a ligand contact to substrate. H181 acts as the Proton acceptor in catalysis. Residue T234 coordinates substrate.

Belongs to the LDH/MDH superfamily. LDH family. Homotetramer.

It localises to the cytoplasm. The catalysed reaction is (S)-lactate + NAD(+) = pyruvate + NADH + H(+). It participates in fermentation; pyruvate fermentation to lactate; (S)-lactate from pyruvate: step 1/1. Catalyzes the conversion of lactate to pyruvate. The polypeptide is L-lactate dehydrogenase (Mycoplasmoides gallisepticum (strain R(low / passage 15 / clone 2)) (Mycoplasma gallisepticum)).